A 417-amino-acid polypeptide reads, in one-letter code: NADH-quinone oxidoreductase subunit D (417 aa).

Belongs to the complex I 49 kDa subunit family. In terms of assembly, NDH-1 is composed of 14 different subunits. Subunits NuoB, C, D, E, F, and G constitute the peripheral sector of the complex.

It localises to the cell inner membrane. The enzyme catalyses a quinone + NADH + 5 H(+)(in) = a quinol + NAD(+) + 4 H(+)(out). Its function is as follows. NDH-1 shuttles electrons from NADH, via FMN and iron-sulfur (Fe-S) centers, to quinones in the respiratory chain. The immediate electron acceptor for the enzyme in this species is believed to be ubiquinone. Couples the redox reaction to proton translocation (for every two electrons transferred, four hydrogen ions are translocated across the cytoplasmic membrane), and thus conserves the redox energy in a proton gradient. The polypeptide is NADH-quinone oxidoreductase subunit D (Acidovorax sp. (strain JS42)).